We begin with the raw amino-acid sequence, 304 residues long: UDP-N-acetylenolpyruvoylglucosamine reductase (304 aa).

An FAD-binding PCMH-type domain is found at 33–198 (RVGGPVDILL…ITATFCFESG (166 aa)). Arginine 177 is a catalytic residue. Serine 227 acts as the Proton donor in catalysis. The active site involves glutamate 297.

This sequence belongs to the MurB family. It depends on FAD as a cofactor.

The protein resides in the cytoplasm. It carries out the reaction UDP-N-acetyl-alpha-D-muramate + NADP(+) = UDP-N-acetyl-3-O-(1-carboxyvinyl)-alpha-D-glucosamine + NADPH + H(+). Its pathway is cell wall biogenesis; peptidoglycan biosynthesis. Its function is as follows. Cell wall formation. This chain is UDP-N-acetylenolpyruvoylglucosamine reductase, found in Clostridium botulinum (strain Eklund 17B / Type B).